A 53-amino-acid polypeptide reads, in one-letter code: Large ribosomal subunit protein eL40 (53 aa).

This sequence belongs to the eukaryotic ribosomal protein eL40 family.

The chain is Large ribosomal subunit protein eL40 from Pyrobaculum calidifontis (strain DSM 21063 / JCM 11548 / VA1).